Reading from the N-terminus, the 663-residue chain is MKKFGAVVLALFLVGLMAGSVLAAPQKPAVRNVSQQKNYGLLTPGLFKKVQRMSWDQEVSTIIMFDNQADKEKAVEILDFLGAKIKYNYHIIPALAVKIKVKDLLIIAGLMDTGYFGNAQLSGVQFIQEDYVVKVAVETEGLDESAAQVMATNMWNLGYDGSGITIGIIDTGIDASHPDLQGKVIGWVDFVNGKTTPYDDNGHGTHVASIAAGTGAASNGKYKGMAPGAKLVGIKVLNGQGSGSISDIINGVDWAVQNKDKYGIKVINLSLGSSQSSDGTDSLSQAVNNAWDAGLVVVVAAGNSGPNKYTVGSPAAASKVITVGAVDKYDVITDFSSRGPTADNRLKPEVVAPGNWIIAARASGTSMGQPINDYYTAAPGTSMATPHVAGIAALLLQAHPSWTPDKVKTALIETADIVKPDEIADIAYGAGRVNAYKAAYYDNYAKLTFTGYVSNKGSQSHQFTISGAGFVTATLYWDNSGSDLDLYLYDPNGNQVDYSYTAYYGFEKVGYYNPTAGTWTIKVVSYSGSANYQVDVVSDGSLGQPSGGGSEPSPSPSPEPTVDEKTFTGTVHDYYDKSDTFTMTVNSGATKITGDLYFDTSYHDLDLYLYDPNQNLVDRSESSNSYEHVEYNNPAPGTWYFLVYAYDTYGYADYQLDAKVYYG.

A signal peptide spans 1–23; that stretch reads MKKFGAVVLALFLVGLMAGSVLA. Residues 24-136 constitute a propeptide, removed in mature form; that stretch reads APQKPAVRNV…IQEDYVVKVA (113 aa). The Peptidase S8 domain maps to 139-439; it reads TEGLDESAAQ…AGRVNAYKAA (301 aa). Residues Asp-170, His-203, and Ser-382 each act as charge relay system in the active site. Residues Pro-420, Ile-423, Asp-483, Leu-484, Asp-485, Asp-497, Tyr-498, Thr-501, and Glu-507 each coordinate Ca(2+). Residues 537 to 565 are disordered; it reads VSDGSLGQPSGGGSEPSPSPSPEPTVDEK. The propeptide at 563–663 is removed in mature form; it reads DEKTFTGTVH…YQLDAKVYYG (101 aa).

It belongs to the peptidase S8 family. Monomer.

The enzyme catalyses Hydrolysis of proteins with broad specificity for peptide bonds, and a preference for a large uncharged residue in P1. Hydrolyzes peptide amides.. Its activity is regulated as follows. Resistant to treatment with 5% SDS, 8 M urea, 10% Triton X-100 or 10% Tween-20. Fully active although less stable in the presence of 10 mM EDTA. Activity not affected by the absence or presence of 10 mM CaCl(2). Unstable in the presence of 2 M or over GdnHCl and loses 35% and 99% of its activity upon incubation with 2 and 4 M GdnHCl, respectively, for 1 hour at 55 degrees Celsius. Nearly fully loses activity upon incubation at pH 2.0. Functionally, serine protease with a broad substrate specificity. The polypeptide is Subtilisin-like serine protease (Thermococcus kodakarensis (strain ATCC BAA-918 / JCM 12380 / KOD1) (Pyrococcus kodakaraensis (strain KOD1))).